Here is a 403-residue protein sequence, read N- to C-terminus: Acetylornithine aminotransferase (403 aa).

Residues 101 to 102 (GA) and F134 contribute to the pyridoxal 5'-phosphate site. R137 contacts N(2)-acetyl-L-ornithine. 219–222 (DEVQ) lines the pyridoxal 5'-phosphate pocket. N6-(pyridoxal phosphate)lysine is present on K248. T276 is a N(2)-acetyl-L-ornithine binding site. Pyridoxal 5'-phosphate is bound at residue T277.

This sequence belongs to the class-III pyridoxal-phosphate-dependent aminotransferase family. ArgD subfamily. Homodimer. Pyridoxal 5'-phosphate serves as cofactor.

The protein resides in the cytoplasm. The enzyme catalyses N(2)-acetyl-L-ornithine + 2-oxoglutarate = N-acetyl-L-glutamate 5-semialdehyde + L-glutamate. It functions in the pathway amino-acid biosynthesis; L-arginine biosynthesis; N(2)-acetyl-L-ornithine from L-glutamate: step 4/4. This is Acetylornithine aminotransferase from Brucella melitensis biotype 1 (strain ATCC 23456 / CCUG 17765 / NCTC 10094 / 16M).